A 355-amino-acid chain; its full sequence is Putative early 40.3 kDa protein (355 aa).

Functionally, this protein is required for viral late gene expression. The polypeptide is Putative early 40.3 kDa protein (DA41) (Orgyia pseudotsugata multicapsid polyhedrosis virus (OpMNPV)).